A 359-amino-acid polypeptide reads, in one-letter code: Peptide chain release factor 1 (359 aa).

Residue glutamine 235 is modified to N5-methylglutamine. The segment at 283 to 309 (QKAESERSQARRSQVGSGDRSERIRTY) is disordered.

This sequence belongs to the prokaryotic/mitochondrial release factor family. In terms of processing, methylated by PrmC. Methylation increases the termination efficiency of RF1.

It localises to the cytoplasm. Its function is as follows. Peptide chain release factor 1 directs the termination of translation in response to the peptide chain termination codons UAG and UAA. The polypeptide is Peptide chain release factor 1 (Brucella abortus (strain S19)).